A 465-amino-acid polypeptide reads, in one-letter code: Ribosomal protein uS12 methylthiotransferase RimO (465 aa).

The MTTase N-terminal domain maps to 1 to 117 (MKVGFISLGC…IVDICEGMPP (117 aa)). [4Fe-4S] cluster-binding residues include Cys-10, Cys-46, Cys-80, Cys-150, Cys-154, and Cys-157. In terms of domain architecture, Radical SAM core spans 136-369 (ATPRHFAYMK…AIQRKIARAR (234 aa)). The region spanning 371 to 442 (RGLVGKEVPV…DYDVVGTLLA (72 aa)) is the TRAM domain.

The protein belongs to the methylthiotransferase family. RimO subfamily. It depends on [4Fe-4S] cluster as a cofactor.

The protein localises to the cytoplasm. It carries out the reaction L-aspartate(89)-[ribosomal protein uS12]-hydrogen + (sulfur carrier)-SH + AH2 + 2 S-adenosyl-L-methionine = 3-methylsulfanyl-L-aspartate(89)-[ribosomal protein uS12]-hydrogen + (sulfur carrier)-H + 5'-deoxyadenosine + L-methionine + A + S-adenosyl-L-homocysteine + 2 H(+). Catalyzes the methylthiolation of an aspartic acid residue of ribosomal protein uS12. This Solibacter usitatus (strain Ellin6076) protein is Ribosomal protein uS12 methylthiotransferase RimO.